Consider the following 629-residue polypeptide: tRNA uridine 5-carboxymethylaminomethyl modification enzyme MnmG (629 aa).

FAD-binding positions include 18-23, valine 130, and serine 188; that span reads GGGHAG. 280-294 provides a ligand contact to NAD(+); that stretch reads GPRYCPSIEDKVVRF. Glutamine 377 is an FAD binding site.

This sequence belongs to the MnmG family. Homodimer. Heterotetramer of two MnmE and two MnmG subunits. FAD serves as cofactor.

It is found in the cytoplasm. Its function is as follows. NAD-binding protein involved in the addition of a carboxymethylaminomethyl (cmnm) group at the wobble position (U34) of certain tRNAs, forming tRNA-cmnm(5)s(2)U34. The protein is tRNA uridine 5-carboxymethylaminomethyl modification enzyme MnmG of Granulibacter bethesdensis (strain ATCC BAA-1260 / CGDNIH1).